The sequence spans 151 residues: Small ribosomal subunit protein uS13 (151 aa).

This sequence belongs to the universal ribosomal protein uS13 family. Part of the 30S ribosomal subunit. Forms a loose heterodimer with protein S19. Forms two bridges to the 50S subunit in the 70S ribosome.

Functionally, located at the top of the head of the 30S subunit, it contacts several helices of the 16S rRNA. In the 70S ribosome it contacts the 23S rRNA (bridge B1a) and protein L5 of the 50S subunit (bridge B1b), connecting the 2 subunits; these bridges are implicated in subunit movement. The sequence is that of Small ribosomal subunit protein uS13 from Methanospirillum hungatei JF-1 (strain ATCC 27890 / DSM 864 / NBRC 100397 / JF-1).